A 484-amino-acid polypeptide reads, in one-letter code: 6-phosphogluconate dehydrogenase, decarboxylating (484 aa).

Residues 11-16 (GLAVMG), 34-36 (NRT), 76-78 (VRA), and Asn104 contribute to the NADP(+) site. Residues Asn104 and 130 to 132 (SGG) contribute to the substrate site. Lys185 (proton acceptor) is an active-site residue. 188–189 (HN) is a substrate binding site. Glu192 serves as the catalytic Proton donor. Positions 193, 262, 289, 447, and 453 each coordinate substrate.

It belongs to the 6-phosphogluconate dehydrogenase family. Homodimer.

It catalyses the reaction 6-phospho-D-gluconate + NADP(+) = D-ribulose 5-phosphate + CO2 + NADPH. It participates in carbohydrate degradation; pentose phosphate pathway; D-ribulose 5-phosphate from D-glucose 6-phosphate (oxidative stage): step 3/3. Catalyzes the oxidative decarboxylation of 6-phosphogluconate to ribulose 5-phosphate and CO(2), with concomitant reduction of NADP to NADPH. The chain is 6-phosphogluconate dehydrogenase, decarboxylating from Aggregatibacter actinomycetemcomitans (Actinobacillus actinomycetemcomitans).